We begin with the raw amino-acid sequence, 359 residues long: Peptide chain release factor 1 (359 aa).

An N5-methylglutamine modification is found at glutamine 235. Residues 283 to 309 (QKAESERSQARRSQVGSGDRSERIRTY) are disordered.

It belongs to the prokaryotic/mitochondrial release factor family. Methylated by PrmC. Methylation increases the termination efficiency of RF1.

Its subcellular location is the cytoplasm. Peptide chain release factor 1 directs the termination of translation in response to the peptide chain termination codons UAG and UAA. In Brucella suis (strain ATCC 23445 / NCTC 10510), this protein is Peptide chain release factor 1.